A 429-amino-acid chain; its full sequence is Zinc metalloproteinase nas-17 (429 aa).

An N-terminal signal peptide occupies residues 1–21 (MFLRPSTLLLTLFLALVAGSA). N54 carries N-linked (GlcNAc...) asparagine glycosylation. Residues 62-251 (RQITKIWKKW…VNINVRYSCG (190 aa)) enclose the Peptidase M12A domain. Cystine bridges form between C104/C250, C125/C144, C252/C272, and C274/C283. H152 contacts Zn(2+). E153 is an active-site residue. Residues H156 and H162 each contribute to the Zn(2+) site. Positions 245 to 284 (NVRYSCGCAKSLTCENGGYTNPSNCATCVCPTGFAGTLCN) constitute an EGF-like domain.

It depends on Zn(2+) as a cofactor.

It localises to the secreted. In terms of biological role, metalloprotease. The chain is Zinc metalloproteinase nas-17 (nas-17) from Caenorhabditis elegans.